We begin with the raw amino-acid sequence, 355 residues long: uncharacterized protein (355 aa).

3 consecutive transmembrane segments (helical) span residues 275-295 (SLIV…FVAF), 301-321 (WNSI…VVGV), and 330-350 (IAST…PLAL).

It to M.tuberculosis Rv0497.

The protein localises to the cell membrane. This is an uncharacterized protein from Mycobacterium leprae (strain TN).